The primary structure comprises 146 residues: D-aminoacyl-tRNA deacylase (146 aa).

The short motif at 137 to 138 (GP) is the Gly-cisPro motif, important for rejection of L-amino acids element.

This sequence belongs to the DTD family. In terms of assembly, homodimer.

It localises to the cytoplasm. It carries out the reaction glycyl-tRNA(Ala) + H2O = tRNA(Ala) + glycine + H(+). The catalysed reaction is a D-aminoacyl-tRNA + H2O = a tRNA + a D-alpha-amino acid + H(+). Its function is as follows. An aminoacyl-tRNA editing enzyme that deacylates mischarged D-aminoacyl-tRNAs. Also deacylates mischarged glycyl-tRNA(Ala), protecting cells against glycine mischarging by AlaRS. Acts via tRNA-based rather than protein-based catalysis; rejects L-amino acids rather than detecting D-amino acids in the active site. By recycling D-aminoacyl-tRNA to D-amino acids and free tRNA molecules, this enzyme counteracts the toxicity associated with the formation of D-aminoacyl-tRNA entities in vivo and helps enforce protein L-homochirality. The protein is D-aminoacyl-tRNA deacylase of Acinetobacter baylyi (strain ATCC 33305 / BD413 / ADP1).